Consider the following 282-residue polypeptide: Bifunctional protein FolD (282 aa).

Residues 165–167 (GAS) and isoleucine 231 each bind NADP(+).

The protein belongs to the tetrahydrofolate dehydrogenase/cyclohydrolase family. In terms of assembly, homodimer.

It carries out the reaction (6R)-5,10-methylene-5,6,7,8-tetrahydrofolate + NADP(+) = (6R)-5,10-methenyltetrahydrofolate + NADPH. The catalysed reaction is (6R)-5,10-methenyltetrahydrofolate + H2O = (6R)-10-formyltetrahydrofolate + H(+). It participates in one-carbon metabolism; tetrahydrofolate interconversion. Its function is as follows. Catalyzes the oxidation of 5,10-methylenetetrahydrofolate to 5,10-methenyltetrahydrofolate and then the hydrolysis of 5,10-methenyltetrahydrofolate to 10-formyltetrahydrofolate. The protein is Bifunctional protein FolD of Francisella tularensis subsp. tularensis (strain FSC 198).